The following is a 251-amino-acid chain: B3 domain-containing protein At2g24670 (251 aa).

A disordered region spans residues 48–111 (TTPSTVMESK…SSKTREPTPG (64 aa)). Over residues 56–70 (SKSHIHDHSLRESPT) the composition is skewed to basic and acidic residues. The segment at residues 153 to 249 (VSQIVELEFL…TLYFALVPLY (97 aa)) is a DNA-binding region (TF-B3).

It localises to the nucleus. In Arabidopsis thaliana (Mouse-ear cress), this protein is B3 domain-containing protein At2g24670.